We begin with the raw amino-acid sequence, 395 residues long: Vibriobactin-specific isochorismate synthase (395 aa).

This sequence belongs to the isochorismate synthase family.

It catalyses the reaction chorismate = isochorismate. It participates in siderophore biosynthesis; vibriobactin biosynthesis. This chain is Vibriobactin-specific isochorismate synthase (vibC), found in Vibrio cholerae serotype O1 (strain ATCC 39315 / El Tor Inaba N16961).